Consider the following 307-residue polypeptide: Ribosomal RNA small subunit methyltransferase H (307 aa).

S-adenosyl-L-methionine-binding positions include 32–34 (GGH), aspartate 52, phenylalanine 78, aspartate 100, and glutamine 107.

This sequence belongs to the methyltransferase superfamily. RsmH family.

It is found in the cytoplasm. The enzyme catalyses cytidine(1402) in 16S rRNA + S-adenosyl-L-methionine = N(4)-methylcytidine(1402) in 16S rRNA + S-adenosyl-L-homocysteine + H(+). Functionally, specifically methylates the N4 position of cytidine in position 1402 (C1402) of 16S rRNA. This Coxiella burnetii (strain Dugway 5J108-111) protein is Ribosomal RNA small subunit methyltransferase H.